A 291-amino-acid chain; its full sequence is 4-hydroxy-tetrahydrodipicolinate synthase (291 aa).

Pyruvate is bound at residue threonine 47. Catalysis depends on tyrosine 134, which acts as the Proton donor/acceptor. Residue lysine 162 is the Schiff-base intermediate with substrate of the active site. Isoleucine 205 contributes to the pyruvate binding site.

Belongs to the DapA family. As to quaternary structure, homotetramer; dimer of dimers.

The protein resides in the cytoplasm. The enzyme catalyses L-aspartate 4-semialdehyde + pyruvate = (2S,4S)-4-hydroxy-2,3,4,5-tetrahydrodipicolinate + H2O + H(+). Its pathway is amino-acid biosynthesis; L-lysine biosynthesis via DAP pathway; (S)-tetrahydrodipicolinate from L-aspartate: step 3/4. Functionally, catalyzes the condensation of (S)-aspartate-beta-semialdehyde [(S)-ASA] and pyruvate to 4-hydroxy-tetrahydrodipicolinate (HTPA). The protein is 4-hydroxy-tetrahydrodipicolinate synthase of Methanoculleus marisnigri (strain ATCC 35101 / DSM 1498 / JR1).